Consider the following 124-residue polypeptide: Alpha-endosulfine (124 aa).

S74 bears the Phosphoserine; by GWL mark. The interval 99-124 (VTGDHIPTPQDLPQRKNTILTSKLAG) is disordered. Over residues 113-124 (RKNTILTSKLAG) the composition is skewed to polar residues.

This sequence belongs to the endosulfine family. Phosphorylation at Ser-74 by gwl during mitosis is essential for interaction with ppp2r2d (PR55-delta) and subsequent inactivation of PP2A.

It is found in the cytoplasm. Protein phosphatase inhibitor that specifically inhibits protein phosphatase 2A (PP2A) during mitosis. When phosphorylated at Ser-67 during mitosis, specifically interacts with ppp2r2d (PR55-delta) and inhibits its activity, leading to inactivation of PP2A, an essential condition to keep cyclin-B1-CDK1 activity high during M phase. The sequence is that of Alpha-endosulfine (ensa) from Danio rerio (Zebrafish).